The primary structure comprises 231 residues: Probable septum site-determining protein MinC (231 aa).

Belongs to the MinC family. In terms of assembly, interacts with MinD and FtsZ.

In terms of biological role, cell division inhibitor that blocks the formation of polar Z ring septums. Rapidly oscillates between the poles of the cell to destabilize FtsZ filaments that have formed before they mature into polar Z rings. Prevents FtsZ polymerization. In Baumannia cicadellinicola subsp. Homalodisca coagulata, this protein is Probable septum site-determining protein MinC.